A 314-amino-acid chain; its full sequence is 4-hydroxy-3-methylbut-2-enyl diphosphate reductase (314 aa).

Cysteine 12 serves as a coordination point for [4Fe-4S] cluster. 2 residues coordinate (2E)-4-hydroxy-3-methylbut-2-enyl diphosphate: histidine 41 and histidine 74. 2 residues coordinate dimethylallyl diphosphate: histidine 41 and histidine 74. Isopentenyl diphosphate contacts are provided by histidine 41 and histidine 74. [4Fe-4S] cluster is bound at residue cysteine 96. Histidine 124 is a (2E)-4-hydroxy-3-methylbut-2-enyl diphosphate binding site. Dimethylallyl diphosphate is bound at residue histidine 124. Isopentenyl diphosphate is bound at residue histidine 124. Residue glutamate 126 is the Proton donor of the active site. Threonine 168 serves as a coordination point for (2E)-4-hydroxy-3-methylbut-2-enyl diphosphate. [4Fe-4S] cluster is bound at residue cysteine 198. Residues serine 226, serine 227, asparagine 228, and serine 270 each contribute to the (2E)-4-hydroxy-3-methylbut-2-enyl diphosphate site. Residues serine 226, serine 227, asparagine 228, and serine 270 each contribute to the dimethylallyl diphosphate site. Isopentenyl diphosphate contacts are provided by serine 226, serine 227, asparagine 228, and serine 270.

This sequence belongs to the IspH family. It depends on [4Fe-4S] cluster as a cofactor.

The catalysed reaction is isopentenyl diphosphate + 2 oxidized [2Fe-2S]-[ferredoxin] + H2O = (2E)-4-hydroxy-3-methylbut-2-enyl diphosphate + 2 reduced [2Fe-2S]-[ferredoxin] + 2 H(+). It carries out the reaction dimethylallyl diphosphate + 2 oxidized [2Fe-2S]-[ferredoxin] + H2O = (2E)-4-hydroxy-3-methylbut-2-enyl diphosphate + 2 reduced [2Fe-2S]-[ferredoxin] + 2 H(+). The protein operates within isoprenoid biosynthesis; dimethylallyl diphosphate biosynthesis; dimethylallyl diphosphate from (2E)-4-hydroxy-3-methylbutenyl diphosphate: step 1/1. It functions in the pathway isoprenoid biosynthesis; isopentenyl diphosphate biosynthesis via DXP pathway; isopentenyl diphosphate from 1-deoxy-D-xylulose 5-phosphate: step 6/6. Its function is as follows. Catalyzes the conversion of 1-hydroxy-2-methyl-2-(E)-butenyl 4-diphosphate (HMBPP) into a mixture of isopentenyl diphosphate (IPP) and dimethylallyl diphosphate (DMAPP). Acts in the terminal step of the DOXP/MEP pathway for isoprenoid precursor biosynthesis. The chain is 4-hydroxy-3-methylbut-2-enyl diphosphate reductase from Ectopseudomonas mendocina (strain ymp) (Pseudomonas mendocina).